A 626-amino-acid chain; its full sequence is Conserved oligomeric Golgi complex subunit 8 (626 aa).

A compositionally biased stretch (pro residues) spans 580-598; the sequence is PAPAPALPPNAPSPEPVTP. The disordered stretch occupies residues 580 to 626; sequence PAPAPALPPNAPSPEPVTPVTPAVPDAGQEEVESAGPPQPDEPSAGI.

It belongs to the COG8 family. As to quaternary structure, component of the conserved oligomeric Golgi complex which is composed of eight different subunits and is required for normal Golgi morphology and localization.

Its subcellular location is the golgi apparatus membrane. Required for normal Golgi function. The chain is Conserved oligomeric Golgi complex subunit 8 (COG8) from Bos taurus (Bovine).